Consider the following 235-residue polypeptide: NAD(P)H-hydrate epimerase (235 aa).

The YjeF N-terminal domain maps to 12–218; that stretch reads AIVMDQLLMG…EFLKETNLTI (207 aa). Position 62-66 (62-66) interacts with (6S)-NADPHX; that stretch reads NNGGD. K(+) is bound by residues asparagine 63 and aspartate 127. (6S)-NADPHX-binding positions include 131 to 137 and aspartate 161; that span reads GYSFKGD. Serine 164 serves as a coordination point for K(+).

The protein belongs to the NnrE/AIBP family. K(+) is required as a cofactor.

It catalyses the reaction (6R)-NADHX = (6S)-NADHX. It carries out the reaction (6R)-NADPHX = (6S)-NADPHX. Functionally, catalyzes the epimerization of the S- and R-forms of NAD(P)HX, a damaged form of NAD(P)H that is a result of enzymatic or heat-dependent hydration. This is a prerequisite for the S-specific NAD(P)H-hydrate dehydratase to allow the repair of both epimers of NAD(P)HX. The chain is NAD(P)H-hydrate epimerase from Dictyostelium discoideum (Social amoeba).